Consider the following 332-residue polypeptide: MKQVQTKRDWKKLAYDVVEEKMITKEDAIAILEADDTEVLEIMNAAYIIRHHHFGKKVKLNMIINTKSGLCPEDCGYCSQSIISEAPIDKYAWLTQEKIVEGAHEAIRRKAGTYCIVASGRRPTDKEVNHVIGAVKEIRETTDLKICCCLGFLNEDQAGRLAEAGVHRYNHNLNTHANNYDSICSTHTYDDRVDTVQKAKQAGISPCSGAIFGMGETIEERAEIAFELQRIDADSIPCNFLVAVKGTPLEGQKELTPVECLKVLAMMRFVNPTKEIRISGGREINLRSVQPIGLFAANSIFVGDYLTTAGQEPTADWGMIADLGFEIEECAL.

A Radical SAM core domain is found at 53-282; sequence HFGKKVKLNM…TKEIRISGGR (230 aa). [4Fe-4S] cluster-binding residues include cysteine 71, cysteine 75, and cysteine 78. 4 residues coordinate [2Fe-2S] cluster: cysteine 115, cysteine 147, cysteine 207, and arginine 277.

This sequence belongs to the radical SAM superfamily. Biotin synthase family. In terms of assembly, homodimer. Requires [4Fe-4S] cluster as cofactor. [2Fe-2S] cluster serves as cofactor.

It catalyses the reaction (4R,5S)-dethiobiotin + (sulfur carrier)-SH + 2 reduced [2Fe-2S]-[ferredoxin] + 2 S-adenosyl-L-methionine = (sulfur carrier)-H + biotin + 2 5'-deoxyadenosine + 2 L-methionine + 2 oxidized [2Fe-2S]-[ferredoxin]. Its pathway is cofactor biosynthesis; biotin biosynthesis; biotin from 7,8-diaminononanoate: step 2/2. Its function is as follows. Catalyzes the conversion of dethiobiotin (DTB) to biotin by the insertion of a sulfur atom into dethiobiotin via a radical-based mechanism. The chain is Biotin synthase from Bacillus cereus (strain G9842).